A 351-amino-acid chain; its full sequence is MLEINIHQQLGSLNLTVNLHIAAKGVTAILGRSGAGKSSLINLIAGLTTAQRGYIKLGEQTLYDHEQGINLAPEKRHIGYVFQEHRLFPHYSVAKNLKYGCKRVDNAHFLQIVKLLGIEHLLNRYPSSLSGGEKQRVAIGRALLTKPQILLMDEPLSALDLPRKQELITYLSQLANQVDIPILYVTHSLDEIIRLADQLILLEQGKIIAFDLVVNVWHSDILADWQSETQKISLLELPLNIQQPIYKMVGLKLGKQHIWIPATPHYKIGDKLRITIASKDVSISLDQVQHSSIRNILNGVITQIVEHNDRVDIAVLIETHQIWASISLWSFDELALKIGQQIYVQIKSVSL.

One can recognise an ABC transporter domain in the interval 1-229 (MLEINIHQQL…DILADWQSET (229 aa)). 31–38 (GRSGAGKS) contacts ATP. A Mop domain is found at 290–351 (HSSIRNILNG…IYVQIKSVSL (62 aa)).

Belongs to the ABC transporter superfamily. Molybdate importer (TC 3.A.1.8) family. In terms of assembly, the complex is composed of two ATP-binding proteins (ModC), two transmembrane proteins (ModB) and a solute-binding protein (ModA).

It is found in the cell inner membrane. It catalyses the reaction molybdate(out) + ATP + H2O = molybdate(in) + ADP + phosphate + H(+). In terms of biological role, part of the ABC transporter complex ModABC involved in molybdenum import. Responsible for energy coupling to the transport system. The chain is Molybdenum import ATP-binding protein ModC from Haemophilus ducreyi (strain 35000HP / ATCC 700724).